The chain runs to 431 residues: Mannan endo-1,4-beta-mannosidase 7 (431 aa).

Positions 1 to 25 (MKLLALFPFLAIVIQLSCWELGTDA) are cleaved as a signal peptide. The substrate site is built by W87 and N202. E203 serves as the catalytic Proton donor. Y280 lines the substrate pocket. E320 serves as the catalytic Nucleophile. W362 serves as a coordination point for substrate.

It belongs to the glycosyl hydrolase 5 (cellulase A) family. In terms of tissue distribution, expressed in stems, flowers, siliques and seeds. Expressed in root vasculature, leaf hydathodes, anther filaments, stigma, sepal vasculature, at the base and apical parts of siliques, and replum. Expressed in the micropylar endosperm and radicle tip in early germinating seeds.

The protein resides in the secreted. The catalysed reaction is Random hydrolysis of (1-&gt;4)-beta-D-mannosidic linkages in mannans, galactomannans and glucomannans.. Functionally, required for both, loosening of the micropylar endosperm, and rupture of the seed coat in germinating seeds. May participate in the hydrolysis of the mannans in the cell wall of germinating seeds. The sequence is that of Mannan endo-1,4-beta-mannosidase 7 (MAN7) from Arabidopsis thaliana (Mouse-ear cress).